A 105-amino-acid polypeptide reads, in one-letter code: NADH-quinone oxidoreductase subunit K (105 aa).

3 consecutive transmembrane segments (helical) span residues 8-28, 34-54, and 65-85; these read LAAY…GVFL, IILL…LVAF, and VFVF…LAIL.

This sequence belongs to the complex I subunit 4L family. As to quaternary structure, NDH-1 is composed of 14 different subunits. Subunits NuoA, H, J, K, L, M, N constitute the membrane sector of the complex.

It localises to the cell inner membrane. The catalysed reaction is a quinone + NADH + 5 H(+)(in) = a quinol + NAD(+) + 4 H(+)(out). In terms of biological role, NDH-1 shuttles electrons from NADH, via FMN and iron-sulfur (Fe-S) centers, to quinones in the respiratory chain. The immediate electron acceptor for the enzyme in this species is believed to be ubiquinone. Couples the redox reaction to proton translocation (for every two electrons transferred, four hydrogen ions are translocated across the cytoplasmic membrane), and thus conserves the redox energy in a proton gradient. The sequence is that of NADH-quinone oxidoreductase subunit K from Acidithiobacillus ferrooxidans (strain ATCC 23270 / DSM 14882 / CIP 104768 / NCIMB 8455) (Ferrobacillus ferrooxidans (strain ATCC 23270)).